The chain runs to 348 residues: Dihydroorotase (348 aa).

2 residues coordinate Zn(2+): H14 and H16. Substrate-binding positions include 16 to 18 (HLR) and N42. 3 residues coordinate Zn(2+): K100, H137, and H175. Position 100 is an N6-carboxylysine (K100). H137 serves as a coordination point for substrate. A substrate-binding site is contributed by L220. Zn(2+) is bound at residue D248. D248 is an active-site residue. Positions 252 and 264 each coordinate substrate.

It belongs to the metallo-dependent hydrolases superfamily. DHOase family. Class II DHOase subfamily. As to quaternary structure, homodimer. It depends on Zn(2+) as a cofactor.

It carries out the reaction (S)-dihydroorotate + H2O = N-carbamoyl-L-aspartate + H(+). Its pathway is pyrimidine metabolism; UMP biosynthesis via de novo pathway; (S)-dihydroorotate from bicarbonate: step 3/3. Functionally, catalyzes the reversible cyclization of carbamoyl aspartate to dihydroorotate. This chain is Dihydroorotase, found in Pseudomonas paraeruginosa (strain DSM 24068 / PA7) (Pseudomonas aeruginosa (strain PA7)).